The sequence spans 291 residues: 33 kDa chaperonin (291 aa).

Cystine bridges form between C235–C237 and C268–C271.

This sequence belongs to the HSP33 family. Post-translationally, under oxidizing conditions two disulfide bonds are formed involving the reactive cysteines. Under reducing conditions zinc is bound to the reactive cysteines and the protein is inactive.

The protein resides in the cytoplasm. Functionally, redox regulated molecular chaperone. Protects both thermally unfolding and oxidatively damaged proteins from irreversible aggregation. Plays an important role in the bacterial defense system toward oxidative stress. The protein is 33 kDa chaperonin of Streptococcus agalactiae serotype Ia (strain ATCC 27591 / A909 / CDC SS700).